A 414-amino-acid polypeptide reads, in one-letter code: Calcium/calmodulin-dependent protein kinase cmkA (414 aa).

Residues Tyr-23–Leu-278 form the Protein kinase domain. ATP is bound by residues Leu-29–Val-37 and Lys-50. Residue Asp-142 is the Proton acceptor of the active site. Positions Leu-278 to Ile-314 are autoinhibitory domain. The interval Arg-293–Glu-315 is calmodulin-binding. Disordered stretches follow at residues Gln-320 to Leu-375 and Glu-394 to Ser-414. The span at Ser-351–Asn-364 shows a compositional bias: polar residues.

Belongs to the protein kinase superfamily. CAMK Ser/Thr protein kinase family. CaMK subfamily. As to quaternary structure, monomer. Autophosphorylated in a calcium/calmodulin-dependent manner.

The catalysed reaction is L-seryl-[protein] + ATP = O-phospho-L-seryl-[protein] + ADP + H(+). It catalyses the reaction L-threonyl-[protein] + ATP = O-phospho-L-threonyl-[protein] + ADP + H(+). Activated by Ca(2+)/calmodulin. Binding of calmodulin may relieve intrasteric autoinhibition. Functionally, calcium/calmodulin-dependent protein kinase. Required in nuclear division cycle for progression from G2 to mitosis. Required for hyphal growth. This Emericella nidulans (strain FGSC A4 / ATCC 38163 / CBS 112.46 / NRRL 194 / M139) (Aspergillus nidulans) protein is Calcium/calmodulin-dependent protein kinase cmkA (cmkA).